Consider the following 416-residue polypeptide: Serine/threonine-protein phosphatase PP2A-like PPG1 (416 aa).

Residues Asp-62, His-64, Asp-90, and Asn-122 each coordinate Mn(2+). His-123 serves as the catalytic Proton donor. Residues His-173 and His-248 each contribute to the Mn(2+) site. Positions 363 to 391 (EDTLQGKSVNGINFDDELSTSDDTSGSGG) are disordered.

It belongs to the PPP phosphatase family. PP-2A subfamily. The cofactor is Mn(2+).

It catalyses the reaction O-phospho-L-seryl-[protein] + H2O = L-seryl-[protein] + phosphate. The catalysed reaction is O-phospho-L-threonyl-[protein] + H2O = L-threonyl-[protein] + phosphate. Its activity is regulated as follows. Inhibited by okadaic acid, a specific inhibitor of serine/threonine phosphatases of types 1, 2A and 2B. Its function is as follows. Serine/threonine-protein phosphatase that plays an important role in controlling colony morphology, filament extension and agar invasion. Down-regulates expression of NRG1 and affects the expression of multiple filament-specific transcripts in response to serum and 37 degrees Celsius. Plays a crucial role in virulence in a mouse model of systemic candidiasis. The protein is Serine/threonine-protein phosphatase PP2A-like PPG1 of Candida albicans (strain SC5314 / ATCC MYA-2876) (Yeast).